The primary structure comprises 25 residues: Repetitive proline-rich cell wall protein (25 aa).

Residues N1 to P25 are disordered. Repeat copies occupy residues P5 to K9, P10 to K14, P15 to K19, and P20 to K24. The 4 X 5 AA tandem repeats of P-P-V-[EY]-K stretch occupies residues P5 to K24. Residues P6, P11, P16, and P21 each carry the 4-hydroxyproline modification. Pro residues predominate over residues E8–P25.

Belongs to the plant proline-rich protein superfamily. ENOD12 family.

It localises to the secreted. It is found in the cell wall. The protein is Repetitive proline-rich cell wall protein of Phaseolus vulgaris (Kidney bean).